A 495-amino-acid polypeptide reads, in one-letter code: Putative aldehyde dehydrogenase AldA (495 aa).

NAD(+) is bound at residue 212–218 (GKGSESG). Active-site residues include glutamate 256 and cysteine 290.

Belongs to the aldehyde dehydrogenase family.

The catalysed reaction is an aldehyde + NAD(+) + H2O = a carboxylate + NADH + 2 H(+). This chain is Putative aldehyde dehydrogenase AldA (aldA), found in Staphylococcus aureus (strain MSSA476).